The sequence spans 749 residues: Catalase-peroxidase 2 (749 aa).

A signal peptide spans 1-27 (MFKRTIPLFAAFTLAISPSIFPNYAHA). The tryptophyl-tyrosyl-methioninium (Trp-Tyr) (with M-255) cross-link spans 107–229 (WHAAGTYRIY…LAATVMGLIY (123 aa)). Residue H108 is the Proton acceptor of the active site. Positions 229–255 (YVNPEGPNGVPDPLAAAEKIRETFGRM) form a cross-link, tryptophyl-tyrosyl-methioninium (Tyr-Met) (with W-107). H270 serves as a coordination point for heme b.

The protein belongs to the peroxidase family. Peroxidase/catalase subfamily. As to quaternary structure, homodimer or homotetramer. It depends on heme b as a cofactor. Post-translationally, formation of the three residue Trp-Tyr-Met cross-link is important for the catalase, but not the peroxidase activity of the enzyme.

It carries out the reaction H2O2 + AH2 = A + 2 H2O. The catalysed reaction is 2 H2O2 = O2 + 2 H2O. Bifunctional enzyme with both catalase and broad-spectrum peroxidase activity. The sequence is that of Catalase-peroxidase 2 from Legionella pneumophila (strain Lens).